The primary structure comprises 332 residues: 2,3-diketo-L-gulonate reductase (332 aa).

The active-site Proton donor is His-44. NAD(+) is bound by residues 168 to 174 (ITMVDMS), 224 to 225 (WK), and 304 to 306 (GHE).

The protein belongs to the LDH2/MDH2 oxidoreductase family. DlgD subfamily. Homodimer.

The protein localises to the cytoplasm. The catalysed reaction is 3-dehydro-L-gulonate + NAD(+) = 2,3-dioxo-L-gulonate + NADH + H(+). It carries out the reaction 3-dehydro-L-gulonate + NADP(+) = 2,3-dioxo-L-gulonate + NADPH + H(+). Functionally, catalyzes the reduction of 2,3-diketo-L-gulonate in the presence of NADH, to form 3-keto-L-gulonate. In Escherichia coli O127:H6 (strain E2348/69 / EPEC), this protein is 2,3-diketo-L-gulonate reductase.